The following is an 86-amino-acid chain: Small ribosomal subunit protein bS16 (86 aa).

The protein belongs to the bacterial ribosomal protein bS16 family.

The chain is Small ribosomal subunit protein bS16 from Trichormus variabilis (strain ATCC 29413 / PCC 7937) (Anabaena variabilis).